The chain runs to 252 residues: Probable transcriptional regulatory protein HNE_0161 (252 aa).

Belongs to the TACO1 family.

It is found in the cytoplasm. The protein is Probable transcriptional regulatory protein HNE_0161 of Hyphomonas neptunium (strain ATCC 15444).